The primary structure comprises 80 residues: Raniseptin-8 (80 aa).

Positions 1–22 are cleaved as a signal peptide; that stretch reads MAFLKKSLFLVLFLGIVSLSIC. The propeptide occupies 23–49; sequence EEEKREGEEEEKQEEENEELSEEELRE. The segment at 27-46 is disordered; sequence REGEEEEKQEEENEELSEEE. A compositionally biased stretch (acidic residues) spans 30-44; it reads EEEEKQEEENEELSE.

This sequence belongs to the frog skin active peptide (FSAP) family. Dermaseptin subfamily. Expressed by the skin glands.

Its subcellular location is the secreted. Its function is as follows. Has antibacterial activity. The chain is Raniseptin-8 from Boana raniceps (Chaco tree frog).